We begin with the raw amino-acid sequence, 297 residues long: Ribosomal RNA small subunit methyltransferase H (297 aa).

Residues 37-39, Glu-56, Phe-87, Asp-102, and His-109 contribute to the S-adenosyl-L-methionine site; that span reads GGH.

Belongs to the methyltransferase superfamily. RsmH family.

It localises to the cytoplasm. It catalyses the reaction cytidine(1402) in 16S rRNA + S-adenosyl-L-methionine = N(4)-methylcytidine(1402) in 16S rRNA + S-adenosyl-L-homocysteine + H(+). In terms of biological role, specifically methylates the N4 position of cytidine in position 1402 (C1402) of 16S rRNA. The protein is Ribosomal RNA small subunit methyltransferase H of Borrelia hermsii (strain HS1 / DAH).